The following is a 247-amino-acid chain: Lysosomal membrane ascorbate-dependent ferrireductase CYB561A3 (247 aa).

Topologically, residues 1-3 (MRG) are cytoplasmic. Residues 4-24 (IVGFYITYLLCLILGIACVVL) form a helical membrane-spanning segment. Residues 13–223 (LCLILGIACV…FGLVVLKILS (211 aa)) form the Cytochrome b561 domain. The Lumenal segment spans residues 25-46 (VVHWNFMYRDGFAWDGSSKNFN). The chain crosses the membrane as a helical span at residues 47-67 (WHPVLMVTGMLVLYGNAAVVY). His48 and Arg68 together coordinate heme b. The Cytoplasmic segment spans residues 68–82 (RIPLTWGHNKLPWKL). Positions 77 and 81 each coordinate L-ascorbate. Residues 83–103 (LHAGLLLLSFIFSVIGLCAVF) traverse the membrane as a helical segment. Heme b is bound by residues His84, 113-116 (NLYS), and His118. Residues 104–120 (NFHNVHHTANLYSLHSW) lie on the Lumenal side of the membrane. The chain crosses the membrane as a helical span at residues 121-141 (VGICTAALFTAQWVMGFTSFL). The Cytoplasmic segment spans residues 142–155 (LPCTPMAVRAFVKP). Arg150 contributes to the L-ascorbate binding site. A helical membrane pass occupies residues 156–176 (THVWMGAMILVLSIVSCISGI). Positions 157 and 178 each coordinate heme b. Over 177–201 (NEKLFFVLKETTNGTKPYSALPPEA) the chain is Lumenal. N-linked (GlcNAc...) asparagine glycosylation is present at Asn189. The chain crosses the membrane as a helical span at residues 202-222 (VAANSLGVIIVAFGLVVLKIL). Over 223-247 (SNQMWQRPEPGDDEGVYRPLAYDGS) the chain is Cytoplasmic. Gln228 contributes to the heme b binding site.

As to quaternary structure, homodimer. Heme b is required as a cofactor.

It localises to the late endosome membrane. The protein resides in the lysosome membrane. It catalyses the reaction Fe(3+)(out) + L-ascorbate(in) = monodehydro-L-ascorbate radical(in) + Fe(2+)(out) + H(+). Functionally, transmembrane reductase that uses ascorbate as an electron donor in the cytoplasm and transfers electrons across membranes to reduce iron cations Fe(3+) into Fe(2+) in the lumen of the late endosome and lysosome. Reduced iron can then be extruded from the late endosome and lysosome to the cytoplasm by divalent metal-specific transporters. It is therefore most probably involved in endosomal and lysosomal cellular iron homeostasis. The protein is Lysosomal membrane ascorbate-dependent ferrireductase CYB561A3 (cyb561a3a) of Danio rerio (Zebrafish).